A 473-amino-acid chain; its full sequence is GTPase Der (473 aa).

EngA-type G domains lie at 5-170 and 178-351; these read PVVA…PNQE and LKLA…QSSM. Residues 11 to 18, 58 to 62, 123 to 126, 184 to 191, 231 to 235, and 296 to 299 contribute to the GTP site; these read GRPNVGKS, DTGGI, NKVD, DTAGV, and NKWD. Residues 352–436 form the KH-like domain; it reads FEVSTNRLTQ…PLNVVFKLNE (85 aa). Residues 438–454 show a composition bias toward polar residues; sequence PYANKSDTPTKAKTQQL. The interval 438-473 is disordered; the sequence is PYANKSDTPTKAKTQQLRQRERNRAQKFTTKDKKPR. The segment covering 455–473 has biased composition (basic and acidic residues); sequence RQRERNRAQKFTTKDKKPR.

This sequence belongs to the TRAFAC class TrmE-Era-EngA-EngB-Septin-like GTPase superfamily. EngA (Der) GTPase family. As to quaternary structure, associates with the 50S ribosomal subunit.

GTPase that plays an essential role in the late steps of ribosome biogenesis. In Psychrobacter arcticus (strain DSM 17307 / VKM B-2377 / 273-4), this protein is GTPase Der.